Consider the following 542-residue polypeptide: MSRQSTVTFHSGSRRGFSTASATTPTAGRSRFSSVSVARSSGNSGGLGRISGIGSGFGSRSLYNLGATRPVSVGGCAGSGFRSGFGGRASSSFGYGGGFGGPGFPVCPSGSIQEVTVNQSLLTPLNLQIDPTIQRVRKEEREQIKTLNNKFASFIDKVRFLEQQNKVLETKWNLLQEQGSRTVRQNLEPFFDAYVNDLRRQLDSVTAERGRLDAELRHMQEVVEDFKVRYEDEINKRAAAENEFVGLKKDVDGAYMNKVELEAKVDSLTDQINFYRMVYEAELSQMQNQVSDTSVVLSMDNNRSLDLDSIIAEVKAQYEDIANRSRAEAESWYQTKYEELQVTAGRHGDDLRNTKQEISEMNRMIQRLRSEIDAVKKQCSSLQTAISDTEQRGELALKDARAKLVELEDALQKAKQDMARLLREYQELMNVKLALDVEIATYRKLLEGEECRLSGEGVSPVNISVVTSTVSSGYGGGTNIGGGSLGLGGNSGYSFTTTGGHSLGTGLGGSGFTTSSSRGPVGSGSSIKFVSSTSSSRKSYKH.

Positions 1–26 are enriched in polar residues; sequence MSRQSTVTFHSGSRRGFSTASATTPT. Residues 1-44 are disordered; it reads MSRQSTVTFHSGSRRGFSTASATTPTAGRSRFSSVSVARSSGNS. The interval 1-139 is head; it reads MSRQSTVTFH…DPTIQRVRKE (139 aa). Positions 27–42 are enriched in low complexity; that stretch reads AGRSRFSSVSVARSSG. The tract at residues 140–175 is coil 1A; sequence EREQIKTLNNKFASFIDKVRFLEQQNKVLETKWNLL. Residues 140-453 form the IF rod domain; the sequence is EREQIKTLNN…KLLEGEECRL (314 aa). The segment at 176 to 194 is linker 1; sequence QEQGSRTVRQNLEPFFDAY. Residues 195–287 are coil 1B; that stretch reads VNDLRRQLDS…VYEAELSQMQ (93 aa). The segment at 288–310 is linker 12; it reads NQVSDTSVVLSMDNNRSLDLDSI. A coil 2 region spans residues 311 to 449; sequence IAEVKAQYED…ATYRKLLEGE (139 aa). A tail region spans residues 450 to 542; that stretch reads ECRLSGEGVS…TSSSRKSYKH (93 aa). The interval 514 to 542 is disordered; that stretch reads TSSSRGPVGSGSSIKFVSSTSSSRKSYKH.

It belongs to the intermediate filament family. In terms of assembly, heterodimer of a type I and a type II keratin. May associate with KRT17.

Its function is as follows. Plays a central role in hair and nail formation. Essential component of keratin intermediate filaments in the companion layer of the hair follicle. In Rattus norvegicus (Rat), this protein is Keratin, type II cytoskeletal 75 (Krt75).